A 343-amino-acid polypeptide reads, in one-letter code: Fructose-1,6-bisphosphatase class 1 (343 aa).

Residues glutamate 90, aspartate 109, leucine 111, and aspartate 112 each contribute to the Mg(2+) site. Substrate is bound by residues 112 to 115 and asparagine 199; that span reads DGSS. Glutamate 271 is a binding site for Mg(2+).

It belongs to the FBPase class 1 family. Homotetramer. Requires Mg(2+) as cofactor.

It localises to the cytoplasm. The catalysed reaction is beta-D-fructose 1,6-bisphosphate + H2O = beta-D-fructose 6-phosphate + phosphate. The protein operates within carbohydrate biosynthesis; Calvin cycle. The sequence is that of Fructose-1,6-bisphosphatase class 1 from Rhodopseudomonas palustris (strain HaA2).